The primary structure comprises 552 residues: Glutamyl-tRNA reductase 1, chloroplastic (552 aa).

Residues 150-153 (TCNR), Ser210, 215-217 (EGQ), and Gln221 each bind substrate. Cys151 acts as the Nucleophile in catalysis. NADP(+) is bound at residue 292 to 297 (GAGKMG).

This sequence belongs to the glutamyl-tRNA reductase family. Primarily in cotyledons and hypocotyls of greening cucumber seedlings.

The protein localises to the plastid. It localises to the chloroplast. It catalyses the reaction (S)-4-amino-5-oxopentanoate + tRNA(Glu) + NADP(+) = L-glutamyl-tRNA(Glu) + NADPH + H(+). Its pathway is porphyrin-containing compound metabolism; protoporphyrin-IX biosynthesis; 5-aminolevulinate from L-glutamyl-tRNA(Glu): step 1/2. Catalyzes the NADPH-dependent reduction of glutamyl-tRNA(Glu) to glutamate 1-semialdehyde (GSA). The protein is Glutamyl-tRNA reductase 1, chloroplastic (HEMA1) of Cucumis sativus (Cucumber).